Consider the following 114-residue polypeptide: Non-specific lipid-transfer protein 1 (114 aa).

Positions 1-23 are cleaved as a signal peptide; sequence MEIAGKIACFVVLCMVVAAPCAE. Intrachain disulfides connect C27–C73, C37–C50, C51–C96, and C71–C110.

It belongs to the plant LTP family. High expression in leaf epidermis and shoot apex, and also in root epidermis during seedling germination.

In terms of biological role, plant non-specific lipid-transfer proteins transfer phospholipids as well as galactolipids across membranes. Binds cis-unsaturated fatty acids and jasmonic acid with a higher affinity than linear chain fatty acids. Formation of the complex with jasmonic acid results in a conformational change facilitating the LPT1 binding on the elicitin plasma membrane receptor that is known to be involved in plant defense induction. May also play a role in wax or cutin deposition in the cell walls of expanding epidermal cells and certain secretory tissues. This chain is Non-specific lipid-transfer protein 1 (LTP1), found in Nicotiana tabacum (Common tobacco).